A 243-amino-acid polypeptide reads, in one-letter code: UPF0758 protein Tery_2667 (243 aa).

The region spanning 113–235 (VVESPQAAAD…HSSLRQITNL (123 aa)) is the MPN domain. Zn(2+)-binding residues include histidine 184, histidine 186, and aspartate 197. The JAMM motif motif lies at 184-197 (HNHPSGNVEPSPED).

The protein belongs to the UPF0758 family.

This is UPF0758 protein Tery_2667 from Trichodesmium erythraeum (strain IMS101).